The chain runs to 728 residues: Ankyrin repeat protein A (728 aa).

ANK repeat units lie at residues 381–410, 429–458, 477–506, 525–554, and 573–602; these read INLP…ETGY, NGFS…KLAA, TSSH…LLIR, YGCP…SLAQ, and ARDT…TLFN.

This sequence belongs to the Toxin_15 family.

The sequence is that of Ankyrin repeat protein A (arpA) from Escherichia coli (strain K12).